The sequence spans 200 residues: ATP synthase subunit b 2 (200 aa).

A compositionally biased stretch (polar residues) spans 1–16 (MAEQNILTTPSPNADT). Residues 1–38 (MAEQNILTTPSPNADTTIVPPGSPHTHTEQPSGGHGGA) form a disordered region. Residues 46–66 (TFLAQLIWLALAFGLLYYLMS) traverse the membrane as a helical segment.

It belongs to the ATPase B chain family. F-type ATPases have 2 components, F(1) - the catalytic core - and F(0) - the membrane proton channel. F(1) has five subunits: alpha(3), beta(3), gamma(1), delta(1), epsilon(1). F(0) has three main subunits: a(1), b(2) and c(10-14). The alpha and beta chains form an alternating ring which encloses part of the gamma chain. F(1) is attached to F(0) by a central stalk formed by the gamma and epsilon chains, while a peripheral stalk is formed by the delta and b chains.

Its subcellular location is the cell inner membrane. F(1)F(0) ATP synthase produces ATP from ADP in the presence of a proton or sodium gradient. F-type ATPases consist of two structural domains, F(1) containing the extramembraneous catalytic core and F(0) containing the membrane proton channel, linked together by a central stalk and a peripheral stalk. During catalysis, ATP synthesis in the catalytic domain of F(1) is coupled via a rotary mechanism of the central stalk subunits to proton translocation. Functionally, component of the F(0) channel, it forms part of the peripheral stalk, linking F(1) to F(0). The b'-subunit is a diverged and duplicated form of b found in plants and photosynthetic bacteria. The chain is ATP synthase subunit b 2 (atpF2) from Methylorubrum populi (strain ATCC BAA-705 / NCIMB 13946 / BJ001) (Methylobacterium populi).